Consider the following 419-residue polypeptide: Pyrophosphate--fructose 6-phosphate 1-phosphotransferase (419 aa).

Diphosphate is bound at residue glycine 13. Residues 142–144 (TVD), 190–192 (MGR), glutamate 247, and 297–300 (YLQR) contribute to the substrate site. Residue aspartate 144 is the Proton acceptor of the active site.

This sequence belongs to the phosphofructokinase type A (PFKA) family. PPi-dependent PFK group II subfamily. Clade 'B2' sub-subfamily. As to quaternary structure, homodimer. It depends on Mg(2+) as a cofactor.

It localises to the cytoplasm. The enzyme catalyses beta-D-fructose 6-phosphate + diphosphate = beta-D-fructose 1,6-bisphosphate + phosphate + H(+). The protein operates within carbohydrate degradation; glycolysis; D-glyceraldehyde 3-phosphate and glycerone phosphate from D-glucose: step 3/4. Its activity is regulated as follows. Non-allosteric. Functionally, catalyzes the phosphorylation of D-fructose 6-phosphate, the first committing step of glycolysis. Uses inorganic phosphate (PPi) as phosphoryl donor instead of ATP like common ATP-dependent phosphofructokinases (ATP-PFKs), which renders the reaction reversible, and can thus function both in glycolysis and gluconeogenesis. Consistently, PPi-PFK can replace the enzymes of both the forward (ATP-PFK) and reverse (fructose-bisphosphatase (FBPase)) reactions. The protein is Pyrophosphate--fructose 6-phosphate 1-phosphotransferase of Halomonas elongata (strain ATCC 33173 / DSM 2581 / NBRC 15536 / NCIMB 2198 / 1H9).